Consider the following 81-residue polypeptide: Putative defensin-like protein 188 (81 aa).

The first 19 residues, 1 to 19, serve as a signal peptide directing secretion; sequence MKNSSLLFILIVVFVISSS. Cystine bridges form between Cys31–Cys81, Cys37–Cys57, Cys43–Cys75, and Cys47–Cys77.

This sequence belongs to the DEFL family.

Its subcellular location is the secreted. The polypeptide is Putative defensin-like protein 188 (LCR41) (Arabidopsis thaliana (Mouse-ear cress)).